Consider the following 98-residue polypeptide: NADH-ubiquinone oxidoreductase chain 4L (98 aa).

The next 3 helical transmembrane spans lie at 1–21 (MSMVYMNIMMAFTVSLVGLLM), 29–49 (SLLCLEGMMLSLFVMAALTIL), and 61–81 (IILLVFAACEAALGLSLLVMV).

It belongs to the complex I subunit 4L family. In terms of assembly, core subunit of respiratory chain NADH dehydrogenase (Complex I) which is composed of 45 different subunits.

The protein localises to the mitochondrion inner membrane. It carries out the reaction a ubiquinone + NADH + 5 H(+)(in) = a ubiquinol + NAD(+) + 4 H(+)(out). In terms of biological role, core subunit of the mitochondrial membrane respiratory chain NADH dehydrogenase (Complex I) which catalyzes electron transfer from NADH through the respiratory chain, using ubiquinone as an electron acceptor. Part of the enzyme membrane arm which is embedded in the lipid bilayer and involved in proton translocation. The polypeptide is NADH-ubiquinone oxidoreductase chain 4L (MT-ND4L) (Bos indicus (Zebu)).